The following is a 348-amino-acid chain: Small ribosomal subunit biogenesis GTPase RsgA (348 aa).

A compositionally biased stretch (basic residues) spans 1–14 (MAKRKLSKQQKWRI). The interval 1 to 39 (MAKRKLSKQQKWRIQKIQDERTKRATRKETQLESQLSGG) is disordered. Basic and acidic residues predominate over residues 16-31 (KIQDERTKRATRKETQ). The 160-residue stretch at 116–275 (FGQLKPIAAN…LIDSPGIREF (160 aa)) folds into the CP-type G domain. Residues 163–166 (NKQD) and 217–225 (GQSGVGKSS) each bind GTP. 4 residues coordinate Zn(2+): cysteine 299, cysteine 304, histidine 306, and cysteine 312.

Belongs to the TRAFAC class YlqF/YawG GTPase family. RsgA subfamily. In terms of assembly, monomer. Associates with 30S ribosomal subunit, binds 16S rRNA. Requires Zn(2+) as cofactor.

It localises to the cytoplasm. In terms of biological role, one of several proteins that assist in the late maturation steps of the functional core of the 30S ribosomal subunit. Helps release RbfA from mature subunits. May play a role in the assembly of ribosomal proteins into the subunit. Circularly permuted GTPase that catalyzes slow GTP hydrolysis, GTPase activity is stimulated by the 30S ribosomal subunit. The sequence is that of Small ribosomal subunit biogenesis GTPase RsgA from Hahella chejuensis (strain KCTC 2396).